The primary structure comprises 86 residues: MADDITETSQTVAAGQLRALIERIERLEEEKKTIADDIKEVFAEAKGTGFDTKAIRTIIRLRKKDQAERQEEDAILDLYMAALGMV.

This sequence belongs to the UPF0335 family.

This chain is UPF0335 protein mll3968, found in Mesorhizobium japonicum (strain LMG 29417 / CECT 9101 / MAFF 303099) (Mesorhizobium loti (strain MAFF 303099)).